The sequence spans 231 residues: Demethylmenaquinone methyltransferase (231 aa).

S-adenosyl-L-methionine contacts are provided by residues threonine 62, aspartate 80, 102-103, and serine 119; that span reads DA.

It belongs to the class I-like SAM-binding methyltransferase superfamily. MenG/UbiE family.

It catalyses the reaction a 2-demethylmenaquinol + S-adenosyl-L-methionine = a menaquinol + S-adenosyl-L-homocysteine + H(+). Its pathway is quinol/quinone metabolism; menaquinone biosynthesis; menaquinol from 1,4-dihydroxy-2-naphthoate: step 2/2. Methyltransferase required for the conversion of demethylmenaquinol (DMKH2) to menaquinol (MKH2). This chain is Demethylmenaquinone methyltransferase, found in Streptomyces avermitilis (strain ATCC 31267 / DSM 46492 / JCM 5070 / NBRC 14893 / NCIMB 12804 / NRRL 8165 / MA-4680).